A 44-amino-acid chain; its full sequence is Photosystem I reaction center subunit IX (44 aa).

A helical membrane pass occupies residues 7 to 27 (YLSVAPVLSTLSLGFLTGFLI).

Belongs to the PsaJ family.

Its subcellular location is the plastid membrane. In terms of biological role, may help in the organization of the PsaE and PsaF subunits. The protein is Photosystem I reaction center subunit IX of Cuscuta gronovii (Common dodder).